We begin with the raw amino-acid sequence, 766 residues long: Tetratricopeptide repeat protein 14 (766 aa).

The disordered stretch occupies residues 35 to 55; it reads LGTAAEPARGAAPPPGAGRKE. The S1 motif domain maps to 125–207; the sequence is GDIVIGRISS…YHEKLAVSLY (83 aa). TPR repeat units lie at residues 209-242, 306-339, 341-373, and 381-414; these read SSLP…NSNS, ALKC…DKQN, EALV…CPTH, and CQTL…DETF. The interval 463-743 is disordered; sequence EEKRLKKKRR…PDSRVKKNLP (281 aa). Residues 475 to 496 are compositionally biased toward low complexity; that stretch reads SSSSSVSSADESVSSSSSSSSS. Over residues 497–506 the composition is skewed to basic residues; sequence SHKRHKKSKR. Residues 539–550 show a composition bias toward polar residues; sequence PTNTSASFLNQK. Over residues 551–562 the composition is skewed to basic and acidic residues; it reads QEVEKLLEKQDR. Residues 594–605 show a composition bias toward polar residues; sequence FYNSYKTQAGSS. Basic and acidic residues-rich tracts occupy residues 606–616 and 629–657; these read KTEKPYKSERH and NSED…RRWE. Polar residues predominate over residues 661–673; the sequence is VKYSTSPASSDYS. The residue at position 666 (Ser-666) is a Phosphoserine. A compositionally biased stretch (basic and acidic residues) spans 707-738; it reads RVYEKEDSCGEGNRNEAPEEMLNSKEQPDSRV.

The protein belongs to the TTC14 family.

This Mus musculus (Mouse) protein is Tetratricopeptide repeat protein 14.